The following is a 321-amino-acid chain: CRISPR-associated aCascade subunit Cas7/Csa2 2 (321 aa).

The protein belongs to the CRISPR-associated protein Cas7/Cst2/DevR family. Subtype I-a/Apern subfamily. As to quaternary structure, part of the aCascade ribonucleoprotein complex, minimally composed of Csa2 and Cas5a, which binds crRNA. Other possible components of aCascade in strain P1 are Cas6b (SSO1437) and Csa5 (SSO1443), while SSO1399, Cas5b (SSO1400) and SSO1401 have sometimes been seen weakly associated. Csa2 is probably the major RNA-binding subunit. The Csa2-Cas5a-crRNA complex also binds target DNA homologous to crRNA, probably forming an R-loop. Purified aCascade forms a filament about 6 nm in width.

In terms of biological role, CRISPR (clustered regularly interspaced short palindromic repeat) is an adaptive immune system that provides protection against mobile genetic elements (viruses, transposable elements and conjugative plasmids). CRISPR clusters contain spacers, sequences complementary to antecedent mobile elements, and target invading nucleic acids. CRISPR clusters are transcribed and processed into CRISPR RNA (crRNA). The sequence is that of CRISPR-associated aCascade subunit Cas7/Csa2 2 (csa2b) from Saccharolobus solfataricus (strain ATCC 35092 / DSM 1617 / JCM 11322 / P2) (Sulfolobus solfataricus).